We begin with the raw amino-acid sequence, 182 residues long: Lipoprotein signal peptidase (182 aa).

Helical transmembrane passes span 12–32 (VAVF…TKAW), 68–88 (ATWV…VAGV), and 91–111 (ISMK…GNLI). Active-site residues include Asp-127 and Asp-140. A helical membrane pass occupies residues 135–155 (VGNVADIYLVVAGVVLVILIL).

Belongs to the peptidase A8 family.

It localises to the cell membrane. The catalysed reaction is Release of signal peptides from bacterial membrane prolipoproteins. Hydrolyzes -Xaa-Yaa-Zaa-|-(S,diacylglyceryl)Cys-, in which Xaa is hydrophobic (preferably Leu), and Yaa (Ala or Ser) and Zaa (Gly or Ala) have small, neutral side chains.. It participates in protein modification; lipoprotein biosynthesis (signal peptide cleavage). Its function is as follows. This protein specifically catalyzes the removal of signal peptides from prolipoproteins. This chain is Lipoprotein signal peptidase, found in Bifidobacterium longum subsp. infantis (strain ATCC 15697 / DSM 20088 / JCM 1222 / NCTC 11817 / S12).